A 467-amino-acid polypeptide reads, in one-letter code: Glycine--tRNA ligase (467 aa).

Substrate-binding residues include Arg100 and Glu175. Residues 207-209 (RNE), 217-222 (FRTREF), 291-292 (EL), and 335-338 (GADR) each bind ATP. 222–226 (FEQME) contributes to the substrate binding site. A substrate-binding site is contributed by 331-335 (EPSLG).

Belongs to the class-II aminoacyl-tRNA synthetase family. In terms of assembly, homodimer.

Its subcellular location is the cytoplasm. It carries out the reaction tRNA(Gly) + glycine + ATP = glycyl-tRNA(Gly) + AMP + diphosphate. Its function is as follows. Catalyzes the attachment of glycine to tRNA(Gly). In Clostridium perfringens (strain 13 / Type A), this protein is Glycine--tRNA ligase.